Reading from the N-terminus, the 230-residue chain is Thymidylate kinase (230 aa).

An ATP-binding site is contributed by 20-27 (GGEGAGKS).

It belongs to the thymidylate kinase family.

The catalysed reaction is dTMP + ATP = dTDP + ADP. In terms of biological role, phosphorylation of dTMP to form dTDP in both de novo and salvage pathways of dTTP synthesis. The protein is Thymidylate kinase of Rhodopseudomonas palustris (strain ATCC BAA-98 / CGA009).